A 796-amino-acid chain; its full sequence is MAKGVNQIINNIRLRKLRKILNQINALSEEFSNFSDEALQAKTKEFKVYLNDNKASLNHILPQAYATVREASKRVLGMYPKDVQILGAIAMHQGNIAEMQTGEGKTLTATMPLYLNALTGKGAYLITTNDYLAKRDFLEMKPLYEWLGLSVSLGFVDIPEYEYAENEKYELYHHDIVYTTNGRLGFDYLIDNLADDIRAKFLPKLNFAIIDEVDSIILDAAQTPLVISGAPRVQSNLFHIVKTFVETLEKDKDFIVNFNKKEVWLTDEGSEKASHYFKVNSIYQQQYFDLVRMIHLSLRAKYLFKYNLDYFIFDGEIVLIDRITGRMLPGTKLQSGLHQAIEALENVEISQDMSVMATITFQNLFKQFDEFSGMTGTGKLGEKEFFDLYSKVVIEIPTHSPIERDDRPDRVFANGDKKNDAILKTVIGIHETQQPVLLITRTAEAAEYFSAELFKRDIPNNLLIAQNVAKEAQMIAEAGQLSAVTVATSMAGRGTDIKLSKEVHDIGGLAVIINEHMDNSRVDRQLRGRSGRQGDPGYSQIFVSLDDDLVKRWSNSNLAENKNLQTMDASKLESSALFKKRVKSIVNKAQRVSEETAMKNREMANEFEKSISVQRDKIYAERNHILEASDFDDFNFEQLARDVFTKDVKNLDLSSERALVNYIYENLSFVFDEDVSNINMQNDEEIIQFLIQQFTQQFNNRLEVAADSYLKLRFIQKSILKAIDSEWIEQVDNLQQLKASVNNRQNGQRNVIFEYHKVALETYEYMSEDIKRKMVRNLCLSILAFDKDGDMVIHFP.

ATP is bound by residues Q84, 102 to 106 (GEGKT), and D496.

This sequence belongs to the SecA family. Monomer and homodimer. Part of the essential Sec protein translocation apparatus which comprises SecA, SecYEG and auxiliary proteins SecDF. Other proteins may also be involved.

The protein resides in the cell membrane. The protein localises to the cytoplasm. The catalysed reaction is ATP + H2O + cellular proteinSide 1 = ADP + phosphate + cellular proteinSide 2.. Part of the Sec protein translocase complex. Interacts with the SecYEG preprotein conducting channel. Has a central role in coupling the hydrolysis of ATP to the transfer of proteins into and across the cell membrane, serving as an ATP-driven molecular motor driving the stepwise translocation of polypeptide chains across the membrane. This is Protein translocase subunit SecA 2 from Staphylococcus epidermidis (strain ATCC 35984 / DSM 28319 / BCRC 17069 / CCUG 31568 / BM 3577 / RP62A).